The chain runs to 117 residues: MKEFHKINLLNDYYGSLLTERQQNFIELYYGEDLSLGEIAEQYNVTRQAVHDTLKRAEQTLTNYEEKLGLVSKFSQESKSLVEVINLLDGYESGEAPEGLEKSKGILKKILEKRQDL.

It belongs to the UPF0122 family.

Might take part in the signal recognition particle (SRP) pathway. This is inferred from the conservation of its genetic proximity to ftsY/ffh. May be a regulatory protein. This Desulforamulus reducens (strain ATCC BAA-1160 / DSM 100696 / MI-1) (Desulfotomaculum reducens) protein is UPF0122 protein Dred_2057.